We begin with the raw amino-acid sequence, 190 residues long: Peptidyl-tRNA hydrolase (190 aa).

TRNA is bound at residue tyrosine 14. The Proton acceptor role is filled by histidine 19. Residues tyrosine 64, asparagine 66, and asparagine 112 each contribute to the tRNA site.

This sequence belongs to the PTH family. Monomer.

Its subcellular location is the cytoplasm. It catalyses the reaction an N-acyl-L-alpha-aminoacyl-tRNA + H2O = an N-acyl-L-amino acid + a tRNA + H(+). In terms of biological role, hydrolyzes ribosome-free peptidyl-tRNAs (with 1 or more amino acids incorporated), which drop off the ribosome during protein synthesis, or as a result of ribosome stalling. Catalyzes the release of premature peptidyl moieties from peptidyl-tRNA molecules trapped in stalled 50S ribosomal subunits, and thus maintains levels of free tRNAs and 50S ribosomes. This chain is Peptidyl-tRNA hydrolase, found in Chlorobium luteolum (strain DSM 273 / BCRC 81028 / 2530) (Pelodictyon luteolum).